The sequence spans 343 residues: MTKTMLRALRGETLPTPPIWLMRQAGRYLPEYRATRAEAGDFLSLCYNPELAAEVTLQPIRRYGFDAAILFADILLLPQALGADLWFETGEGPRMSTITDMAGVEALKGKDEIHEKLAPVYETCRILARELPKETTFIGFAGMPWTVATYMIAGRGSKDQAAAHKLKDTDRPAFEALMDRITEATIEYLSKQVEAGCEVVKLFDSWAGSLKGQDFEDFAVAPAKKIIAELKARHPGLPIIAFPREAGEGYIGFAEKTGADCVAIDNSVSPEWAAENVQKGKSCVQGNLDPKYMITGGDELVQATKRVVEAFRNGPHIFNLGHGITPEADPENVTLLIETIRGK.

Substrate-binding positions include 23–27, Asp73, Tyr150, Ser205, and His322; that span reads RQAGR.

Belongs to the uroporphyrinogen decarboxylase family. Homodimer.

The protein resides in the cytoplasm. It carries out the reaction uroporphyrinogen III + 4 H(+) = coproporphyrinogen III + 4 CO2. The protein operates within porphyrin-containing compound metabolism; protoporphyrin-IX biosynthesis; coproporphyrinogen-III from 5-aminolevulinate: step 4/4. In terms of biological role, catalyzes the decarboxylation of four acetate groups of uroporphyrinogen-III to yield coproporphyrinogen-III. The chain is Uroporphyrinogen decarboxylase from Cereibacter sphaeroides (strain ATCC 17025 / ATH 2.4.3) (Rhodobacter sphaeroides).